A 352-amino-acid polypeptide reads, in one-letter code: C-C chemokine receptor type 5 (352 aa).

The Extracellular portion of the chain corresponds to 1 to 30 (MDYQVSSPTYDIDYYTSEPCQKINVKQIAA). Position 3 is a sulfotyrosine (Tyr-3). O-linked (GalNAc...) serine glycans are attached at residues Ser-6 and Ser-7. Sulfotyrosine is present on residues Tyr-10, Tyr-14, and Tyr-15. Cystine bridges form between Cys-20–Cys-269 and Cys-101–Cys-178. The helical transmembrane segment at 31–58 (RLLPPLYSLVFIFGFVGNILVVLILINC) threads the bilayer. The Cytoplasmic segment spans residues 59-68 (KRLKSMTDIY). The helical transmembrane segment at 69–89 (LLNLAISDLLFLLTVPFWAHY) threads the bilayer. At 90–102 (AAAQWDFGNTMCQ) the chain is on the extracellular side. A helical transmembrane segment spans residues 103–124 (LLTGLYFIGFFSGIFFIILLTI). Topologically, residues 125–141 (DRYLAIVHAVFALKART) are cytoplasmic. A helical membrane pass occupies residues 142–166 (VTFGVVTSVITWVVAVFASLPGIIF). At 167-198 (TRSQREGLHYTCSSHFPYSQYQFWKNFQTLKI) the chain is on the extracellular side. Residues 199–218 (VILGLVLPLLVMVICYSGIL) traverse the membrane as a helical segment. The Cytoplasmic segment spans residues 219 to 235 (KTLLRCRNEKKRHRAVR). Residues 236–260 (LIFTIMIVYFLFWAPYNIVLLLNTF) traverse the membrane as a helical segment. At 261–277 (QEFFGLNNCSSSNRLDQ) the chain is on the extracellular side. Residues 278–301 (AMQVTETLGMTHCCINPIIYAFVG) traverse the membrane as a helical segment. The Cytoplasmic segment spans residues 302–352 (EKFRNYLLVFFQKHIAKRFCKCCSIFQQEASERASSVYTRSTGEQEISVGL). Residues Cys-321, Cys-323, and Cys-324 are each lipidated (S-palmitoyl cysteine). Residues Ser-336, Ser-337, Ser-342, and Ser-349 each carry the phosphoserine; by BARK1 modification.

The protein belongs to the G-protein coupled receptor 1 family. As to quaternary structure, interacts with PRAF2. Efficient ligand binding to CCL3/MIP-1alpha and CCL4/MIP-1beta requires sulfation, O-glycosylation and sialic acid modifications. Glycosylation on Ser-6 is required for efficient binding of CCL4. Interacts with GRK2. Interacts with ARRB1 and ARRB2. Interacts with CNIH4. Interacts with S100A4; this interaction stimulates T-lymphocyte chemotaxis. Sulfated on at least 2 of the N-terminal tyrosines. Sulfation is required for efficient binding of the chemokines, CCL3 and CCL4. In terms of processing, palmitoylation in the C-terminal is important for cell surface expression. Post-translationally, phosphorylation on serine residues in the C-terminal is stimulated by binding CC chemokines especially by APO-RANTES. O-glycosylated, but not N-glycosylated. Ser-6 appears to be the major site even if Ser-7 may be also O-glycosylated. Also sialylated glycans present which contribute to chemokine binding. Thr-16 and Ser-17 may also be glycosylated and, if so, with small moieties such as a T-antigen.

The protein resides in the cell membrane. In terms of biological role, receptor for a number of inflammatory CC-chemokines including CCL3/MIP-1-alpha, CCL4/MIP-1-beta and RANTES and subsequently transduces a signal by increasing the intracellular calcium ion level. May play a role in the control of granulocytic lineage proliferation or differentiation. Participates in T-lymphocyte migration to the infection site by acting as a chemotactic receptor. The chain is C-C chemokine receptor type 5 (CCR5) from Cercocebus galeritus (Tana river mangabey).